We begin with the raw amino-acid sequence, 274 residues long: Shikimate dehydrogenase (NADP(+)) (274 aa).

Residues 14–16 and Thr60 each bind shikimate; that span reads SKS. The active-site Proton acceptor is Lys64. Glu76 contacts NADP(+). Residues Asn85 and Asp101 each contribute to the shikimate site. Residues 126–130, 150–155, and Met214 contribute to the NADP(+) site; these read GAGGA and NRTAEK. Tyr216 serves as a coordination point for shikimate. Gly238 provides a ligand contact to NADP(+).

This sequence belongs to the shikimate dehydrogenase family. As to quaternary structure, homodimer.

It carries out the reaction shikimate + NADP(+) = 3-dehydroshikimate + NADPH + H(+). It functions in the pathway metabolic intermediate biosynthesis; chorismate biosynthesis; chorismate from D-erythrose 4-phosphate and phosphoenolpyruvate: step 4/7. Its function is as follows. Involved in the biosynthesis of the chorismate, which leads to the biosynthesis of aromatic amino acids. Catalyzes the reversible NADPH linked reduction of 3-dehydroshikimate (DHSA) to yield shikimate (SA). This Pseudomonas paraeruginosa (strain DSM 24068 / PA7) (Pseudomonas aeruginosa (strain PA7)) protein is Shikimate dehydrogenase (NADP(+)).